The sequence spans 625 residues: Adenine deaminase 2 (625 aa).

It belongs to the metallo-dependent hydrolases superfamily. Adenine deaminase family. Mn(2+) is required as a cofactor.

It carries out the reaction adenine + H2O + H(+) = hypoxanthine + NH4(+). This is Adenine deaminase 2 from Bradyrhizobium diazoefficiens (strain JCM 10833 / BCRC 13528 / IAM 13628 / NBRC 14792 / USDA 110).